Consider the following 300-residue polypeptide: NAD kinase (300 aa).

D75 functions as the Proton acceptor in the catalytic mechanism. Residues 75 to 76 (DG), 149 to 150 (ND), R177, D179, 190 to 195 (TAYALS), A214, and Q248 each bind NAD(+).

It belongs to the NAD kinase family. A divalent metal cation serves as cofactor.

It is found in the cytoplasm. It carries out the reaction NAD(+) + ATP = ADP + NADP(+) + H(+). In terms of biological role, involved in the regulation of the intracellular balance of NAD and NADP, and is a key enzyme in the biosynthesis of NADP. Catalyzes specifically the phosphorylation on 2'-hydroxyl of the adenosine moiety of NAD to yield NADP. The polypeptide is NAD kinase (Burkholderia mallei (strain SAVP1)).